We begin with the raw amino-acid sequence, 232 residues long: Flagellar L-ring protein (232 aa).

The N-terminal stretch at 1–15 is a signal peptide; sequence MKKVLFYVLPFAFFG. Cysteine 16 is lipidated: N-palmitoyl cysteine. Cysteine 16 is lipidated: S-diacylglycerol cysteine.

The protein belongs to the FlgH family. As to quaternary structure, the basal body constitutes a major portion of the flagellar organelle and consists of four rings (L,P,S, and M) mounted on a central rod.

It localises to the cell outer membrane. The protein resides in the bacterial flagellum basal body. Functionally, assembles around the rod to form the L-ring and probably protects the motor/basal body from shearing forces during rotation. The sequence is that of Flagellar L-ring protein from Campylobacter jejuni subsp. jejuni serotype O:6 (strain 81116 / NCTC 11828).